The following is a 552-amino-acid chain: Glutamine--tRNA ligase (552 aa).

A 'HIGH' region motif is present at residues 34–44 (PEPNGYLHIGH). ATP contacts are provided by residues 35–37 (EPN) and 41–47 (HIGHAKS). 2 residues coordinate L-glutamine: D67 and Y212. ATP-binding positions include T231, 261 to 262 (RL), and 269 to 271 (MSK). Positions 268–272 (IMSKR) match the 'KMSKS' region motif.

Belongs to the class-I aminoacyl-tRNA synthetase family. Monomer.

Its subcellular location is the cytoplasm. It carries out the reaction tRNA(Gln) + L-glutamine + ATP = L-glutaminyl-tRNA(Gln) + AMP + diphosphate. In Aliivibrio salmonicida (strain LFI1238) (Vibrio salmonicida (strain LFI1238)), this protein is Glutamine--tRNA ligase.